We begin with the raw amino-acid sequence, 662 residues long: UvrABC system protein B (662 aa).

A Helicase ATP-binding domain is found at 25–414 (AGLNSKKRSQ…GTVVELIIRP (390 aa)). Position 38 to 45 (38 to 45 (GITGSGKT)) interacts with ATP. The short motif at 91–114 (YYDYYQPEAYIVRTDTFIEKDSSI) is the Beta-hairpin element. Residues 430-592 (QVEDLISEIQ…IIPKTINSAI (163 aa)) enclose the Helicase C-terminal domain. The region spanning 622-657 (KSYMDKLKKEMFKAASNLEFEQAAKLRNQLKTLEKA) is the UVR domain.

The protein belongs to the UvrB family. As to quaternary structure, forms a heterotetramer with UvrA during the search for lesions. Interacts with UvrC in an incision complex.

It is found in the cytoplasm. Functionally, the UvrABC repair system catalyzes the recognition and processing of DNA lesions. A damage recognition complex composed of 2 UvrA and 2 UvrB subunits scans DNA for abnormalities. Upon binding of the UvrA(2)B(2) complex to a putative damaged site, the DNA wraps around one UvrB monomer. DNA wrap is dependent on ATP binding by UvrB and probably causes local melting of the DNA helix, facilitating insertion of UvrB beta-hairpin between the DNA strands. Then UvrB probes one DNA strand for the presence of a lesion. If a lesion is found the UvrA subunits dissociate and the UvrB-DNA preincision complex is formed. This complex is subsequently bound by UvrC and the second UvrB is released. If no lesion is found, the DNA wraps around the other UvrB subunit that will check the other stand for damage. This is UvrABC system protein B from Rickettsia typhi (strain ATCC VR-144 / Wilmington).